The primary structure comprises 100 residues: Urease subunit gamma (100 aa).

This sequence belongs to the urease gamma subunit family. In terms of assembly, heterotrimer of UreA (gamma), UreB (beta) and UreC (alpha) subunits. Three heterotrimers associate to form the active enzyme.

It localises to the cytoplasm. The catalysed reaction is urea + 2 H2O + H(+) = hydrogencarbonate + 2 NH4(+). The protein operates within nitrogen metabolism; urea degradation; CO(2) and NH(3) from urea (urease route): step 1/1. This is Urease subunit gamma from Nitrosospira multiformis (strain ATCC 25196 / NCIMB 11849 / C 71).